We begin with the raw amino-acid sequence, 41 residues long: Photosystem I reaction center subunit IX (41 aa).

A helical membrane pass occupies residues 7 to 27 (YLSTAPVLATLWFGFLAGLLI).

Belongs to the PsaJ family.

It localises to the plastid. It is found in the chloroplast thylakoid membrane. May help in the organization of the PsaE and PsaF subunits. This Physcomitrium patens (Spreading-leaved earth moss) protein is Photosystem I reaction center subunit IX.